The chain runs to 344 residues: Tetraacyldisaccharide 4'-kinase (344 aa).

65–72 (HAGGTGKT) contributes to the ATP binding site.

The protein belongs to the LpxK family.

The catalysed reaction is a lipid A disaccharide + ATP = a lipid IVA + ADP + H(+). Its pathway is glycolipid biosynthesis; lipid IV(A) biosynthesis; lipid IV(A) from (3R)-3-hydroxytetradecanoyl-[acyl-carrier-protein] and UDP-N-acetyl-alpha-D-glucosamine: step 6/6. Functionally, transfers the gamma-phosphate of ATP to the 4'-position of a tetraacyldisaccharide 1-phosphate intermediate (termed DS-1-P) to form tetraacyldisaccharide 1,4'-bis-phosphate (lipid IVA). This chain is Tetraacyldisaccharide 4'-kinase, found in Neisseria meningitidis serogroup B (strain ATCC BAA-335 / MC58).